Reading from the N-terminus, the 184-residue chain is CASP-like protein 1U1 (184 aa).

At 1 to 30 (MSSTGTTLSASEGDKGFRNGAAPAKSKSHS) the chain is on the cytoplasmic side. Residues 31-51 (TIALLRLLAFAATLSAFVTMI) traverse the membrane as a helical segment. Over 52-76 (TNKQKITIGPFTRWSKWHYSDAFMW) the chain is Extracellular. The chain crosses the membrane as a helical span at residues 77–97 (FVVANCIAFIYLLFAAILGLI). The Cytoplasmic segment spans residues 98–111 (SHSPMLVKHLVILD). Residues 112–132 (LIVSYMLFSAASAATAVAYIG) form a helical membrane-spanning segment. Over 133–154 (KNGISQPGWTAICGVFERYCHH) the chain is Extracellular. The chain crosses the membrane as a helical span at residues 155 to 175 (VAGALVACFLGWLFLTIAVFL). The Cytoplasmic segment spans residues 176–184 (GMRRSPAAV).

The protein belongs to the Casparian strip membrane proteins (CASP) family. In terms of assembly, homodimer and heterodimers.

It is found in the cell membrane. The polypeptide is CASP-like protein 1U1 (Marchantia polymorpha (Common liverwort)).